We begin with the raw amino-acid sequence, 600 residues long: Long-chain-fatty-acid--CoA ligase FadD15 (600 aa).

It belongs to the ATP-dependent AMP-binding enzyme family.

It carries out the reaction a long-chain fatty acid + ATP + CoA = a long-chain fatty acyl-CoA + AMP + diphosphate. Its pathway is lipid metabolism; fatty acid biosynthesis. In terms of biological role, catalyzes the activation of long-chain fatty acids as acyl-coenzyme A (acyl-CoA), which are then transferred to the multifunctional polyketide synthase (PKS) type III for further chain extension. The polypeptide is Long-chain-fatty-acid--CoA ligase FadD15 (fadD15) (Mycobacterium bovis (strain ATCC BAA-935 / AF2122/97)).